The chain runs to 219 residues: ATP synthase protein MI25 (219 aa).

Residues 29–49 traverse the membrane as a helical segment; that stretch reads ISIYNEEMIVARCFIGFLILS.

The protein belongs to the ATPase protein MI25 family. In terms of assembly, F-type ATPases have 2 components, CF(1) - the catalytic core - and CF(0) - the membrane proton channel. CF(1) has five subunits: alpha(3), beta(3), gamma(1), delta(1), epsilon(1). CF(0) has three main subunits: a, b and c.

Its subcellular location is the mitochondrion membrane. Its function is as follows. This is one of the chains of the nonenzymatic component (CF(0) subunit) of the mitochondrial ATPase complex. The chain is ATP synthase protein MI25 from Zea mays (Maize).